The sequence spans 217 residues: Salivary glue protein Sgs-3 (217 aa).

The signal sequence occupies residues 1 to 23; that stretch reads MKLTIATVLASILLIGFANVANC. A compositionally biased stretch (low complexity) spans 45–130; sequence KSTSTTTTTT…KPTTHSTPKT (86 aa). A disordered region spans residues 45–163; it reads KSTSTTTTTT…KHTTPTTTTT (119 aa). The segment covering 131–154 has biased composition (basic residues); that stretch reads KPTKHTTPKTKPTKHTTPKTKPTK.

This Drosophila simulans (Fruit fly) protein is Salivary glue protein Sgs-3 (Sgs3).